A 125-amino-acid polypeptide reads, in one-letter code: MIDSPRVCVQVQSVYIESQSTPDDERFVFAYTVTIRNLGRMPVQLLGRYWLITNGNGREIEVQGEGVVGEQPHIAPGEEFQYTSGAVIETPMGTMQGHYEMVDVDGNAFRVAVPVFRLAVPTFIH.

Residues 1–125 (MIDSPRVCVQ…FRLAVPTFIH (125 aa)) form the ApaG domain.

This Enterobacter sp. (strain 638) protein is Protein ApaG.